A 462-amino-acid polypeptide reads, in one-letter code: ATP synthase subunit beta (462 aa).

An ATP-binding site is contributed by 151-158 (GGAGVGKT).

The protein belongs to the ATPase alpha/beta chains family. In terms of assembly, F-type ATPases have 2 components, CF(1) - the catalytic core - and CF(0) - the membrane proton channel. CF(1) has five subunits: alpha(3), beta(3), gamma(1), delta(1), epsilon(1). CF(0) has four main subunits: a(1), b(1), b'(1) and c(9-12).

The protein localises to the cell inner membrane. It catalyses the reaction ATP + H2O + 4 H(+)(in) = ADP + phosphate + 5 H(+)(out). In terms of biological role, produces ATP from ADP in the presence of a proton gradient across the membrane. The catalytic sites are hosted primarily by the beta subunits. This Chlorobium limicola (strain DSM 245 / NBRC 103803 / 6330) protein is ATP synthase subunit beta.